Here is a 507-residue protein sequence, read N- to C-terminus: ATP synthase subunit alpha (507 aa).

ATP is bound at residue 169–176 (GDRQTGKT).

Belongs to the ATPase alpha/beta chains family. F-type ATPases have 2 components, CF(1) - the catalytic core - and CF(0) - the membrane proton channel. CF(1) has five subunits: alpha(3), beta(3), gamma(1), delta(1), epsilon(1). CF(0) has three main subunits: a(1), b(2) and c(9-12). The alpha and beta chains form an alternating ring which encloses part of the gamma chain. CF(1) is attached to CF(0) by a central stalk formed by the gamma and epsilon chains, while a peripheral stalk is formed by the delta and b chains. In this bacterium the a and b subunits are transcribed but do not seem to be translated, thus the ATP synthase consists of the alpha, beta, gamma, delta, epsilon and c subunits.

Its subcellular location is the cell membrane. It catalyses the reaction ATP + H2O + 4 H(+)(in) = ADP + phosphate + 5 H(+)(out). In terms of biological role, produces ATP from ADP in the presence of a proton gradient across the membrane. The alpha chain is a regulatory subunit. This is ATP synthase subunit alpha from Moorella thermoacetica (strain ATCC 39073 / JCM 9320).